A 433-amino-acid polypeptide reads, in one-letter code: 4-hydroxy-3-methylbut-2-en-1-yl diphosphate synthase (flavodoxin) (433 aa).

Residues 1–10 (MRYMQDSSMP) show a composition bias toward polar residues. Positions 1–24 (MRYMQDSSMPCQDASPPDVGAAPR) are disordered. The [4Fe-4S] cluster site is built by C320, C323, C366, and E373.

Belongs to the IspG family. The cofactor is [4Fe-4S] cluster.

The enzyme catalyses (2E)-4-hydroxy-3-methylbut-2-enyl diphosphate + oxidized [flavodoxin] + H2O + 2 H(+) = 2-C-methyl-D-erythritol 2,4-cyclic diphosphate + reduced [flavodoxin]. The protein operates within isoprenoid biosynthesis; isopentenyl diphosphate biosynthesis via DXP pathway; isopentenyl diphosphate from 1-deoxy-D-xylulose 5-phosphate: step 5/6. Functionally, converts 2C-methyl-D-erythritol 2,4-cyclodiphosphate (ME-2,4cPP) into 1-hydroxy-2-methyl-2-(E)-butenyl 4-diphosphate. This Bordetella bronchiseptica (strain ATCC BAA-588 / NCTC 13252 / RB50) (Alcaligenes bronchisepticus) protein is 4-hydroxy-3-methylbut-2-en-1-yl diphosphate synthase (flavodoxin).